Here is a 121-residue protein sequence, read N- to C-terminus: uncharacterized protein (121 aa).

Residues 1–19 form the signal peptide; sequence MKKFALATIFALATTSAFA.

To E.coli YgiW.

It is found in the periplasm. This is an uncharacterized protein from Haemophilus influenzae (strain ATCC 51907 / DSM 11121 / KW20 / Rd).